Here is a 73-residue protein sequence, read N- to C-terminus: uncharacterized protein (73 aa).

It belongs to the asfivirus I73R family.

The protein resides in the virion. This is an uncharacterized protein from Ornithodoros (relapsing fever ticks).